Consider the following 567-residue polypeptide: Urease subunit alpha (567 aa).

One can recognise a Urease domain in the interval 129–567 (GGVDTHIHWI…LPMAQRYFLF (439 aa)). Residues His-134, His-136, and Lys-217 each coordinate Ni(2+). At Lys-217 the chain carries N6-carboxylysine. His-219 provides a ligand contact to substrate. The Ni(2+) site is built by His-246 and His-272. The Proton donor role is filled by His-320. Residue Asp-360 coordinates Ni(2+).

This sequence belongs to the metallo-dependent hydrolases superfamily. Urease alpha subunit family. In terms of assembly, heterotrimer of UreA (gamma), UreB (beta) and UreC (alpha) subunits. Three heterotrimers associate to form the active enzyme. The cofactor is Ni cation. Carboxylation allows a single lysine to coordinate two nickel ions.

It is found in the cytoplasm. It catalyses the reaction urea + 2 H2O + H(+) = hydrogencarbonate + 2 NH4(+). Its pathway is nitrogen metabolism; urea degradation; CO(2) and NH(3) from urea (urease route): step 1/1. This Escherichia coli O157:H7 protein is Urease subunit alpha.